The chain runs to 133 residues: Large ribosomal subunit protein uL16c (133 aa).

Belongs to the universal ribosomal protein uL16 family. Part of the 50S ribosomal subunit.

It localises to the plastid. The protein localises to the chloroplast. The sequence is that of Large ribosomal subunit protein uL16c from Liriodendron tulipifera (Tuliptree).